The following is a 471-amino-acid chain: Histidinol dehydrogenase (471 aa).

NAD(+)-binding residues include Y139, Q204, and N236. Substrate contacts are provided by T259, Q281, and H284. 2 residues coordinate Zn(2+): Q281 and H284. Catalysis depends on proton acceptor residues E350 and H351. Substrate-binding residues include H351, D384, E438, and H443. D384 is a Zn(2+) binding site. H443 is a binding site for Zn(2+).

This sequence belongs to the histidinol dehydrogenase family. It depends on Zn(2+) as a cofactor.

The catalysed reaction is L-histidinol + 2 NAD(+) + H2O = L-histidine + 2 NADH + 3 H(+). It functions in the pathway amino-acid biosynthesis; L-histidine biosynthesis; L-histidine from 5-phospho-alpha-D-ribose 1-diphosphate: step 9/9. Functionally, catalyzes the sequential NAD-dependent oxidations of L-histidinol to L-histidinaldehyde and then to L-histidine. The chain is Histidinol dehydrogenase from Bifidobacterium longum (strain NCC 2705).